The sequence spans 114 residues: Large ribosomal subunit protein bL19 (114 aa).

This sequence belongs to the bacterial ribosomal protein bL19 family.

In terms of biological role, this protein is located at the 30S-50S ribosomal subunit interface and may play a role in the structure and function of the aminoacyl-tRNA binding site. This Clostridium botulinum (strain Loch Maree / Type A3) protein is Large ribosomal subunit protein bL19.